We begin with the raw amino-acid sequence, 86 residues long: Large ribosomal subunit protein bL35m (86 aa).

Residues 1-18 (MLVVFQRVVRATVLVGRK) constitute a mitochondrion transit peptide. The interval 45–69 (RKHAGAQHLNRDTSSSTRARQRQWE) is disordered.

It belongs to the bacterial ribosomal protein bL35 family. Component of the mitochondrial large ribosomal subunit (mt-LSU). Mature yeast 74S mitochondrial ribosomes consist of a small (37S) and a large (54S) subunit. The 37S small subunit contains a 15S ribosomal RNA (15S mt-rRNA) and at least 32 different proteins. The 54S large subunit contains a 21S rRNA (21S mt-rRNA) and at least 45 different proteins.

The protein localises to the mitochondrion. Component of the mitochondrial ribosome (mitoribosome), a dedicated translation machinery responsible for the synthesis of mitochondrial genome-encoded proteins, including at least some of the essential transmembrane subunits of the mitochondrial respiratory chain. The mitoribosomes are attached to the mitochondrial inner membrane and translation products are cotranslationally integrated into the membrane. This is Large ribosomal subunit protein bL35m (new15) from Schizosaccharomyces pombe (strain 972 / ATCC 24843) (Fission yeast).